The sequence spans 411 residues: Na(+)/H(+) antiporter NhaA 2 (411 aa).

The next 10 helical transmembrane spans lie at 18 to 38 (VGGS…NSPV), 59 to 79 (LTVG…VAGL), 97 to 117 (LLPI…AATI), 127 to 147 (GWAI…ALTG), 167 to 187 (LLAI…LWLL), 218 to 238 (WYCM…LGLL), 261 to 281 (PLSA…VALS), 297 to 317 (VIAG…WLAI), 338 to 358 (VLGA…LAGI), and 366 to 386 (IAKV…SALL).

This sequence belongs to the NhaA Na(+)/H(+) (TC 2.A.33) antiporter family.

The protein localises to the cell membrane. It catalyses the reaction Na(+)(in) + 2 H(+)(out) = Na(+)(out) + 2 H(+)(in). Na(+)/H(+) antiporter that extrudes sodium in exchange for external protons. This is Na(+)/H(+) antiporter NhaA 2 from Rhodococcus jostii (strain RHA1).